An 83-amino-acid chain; its full sequence is Large ribosomal subunit protein uL23 (83 aa).

The protein belongs to the universal ribosomal protein uL23 family. As to quaternary structure, part of the 50S ribosomal subunit. Contacts protein L29.

Its function is as follows. Binds to 23S rRNA. One of the proteins that surrounds the polypeptide exit tunnel on the outside of the ribosome. This Thermoplasma volcanium (strain ATCC 51530 / DSM 4299 / JCM 9571 / NBRC 15438 / GSS1) protein is Large ribosomal subunit protein uL23.